A 230-amino-acid polypeptide reads, in one-letter code: MAHPAQLGFQDAASPVMEELLCFHDHALMIVFLISTLVLYIIIAMVSTKLTNKFILDSQEIEIVWTVLPAIILILIALPSLRILYLMDEINDPHVTIKAVGHQWYWSYEYTDYENLEFDSYMVPTQDLTPGGFRLLETDHRMVVPKESPIRILVSAEDVLHSWAVPSLGIKMDAVPGRLNQTAFIVSRPGVFYGQCSEICGANHSFMPIVVEAVPLEFFENWSSAMLEDA.

At 1–14 the chain is on the mitochondrial intermembrane side; that stretch reads MAHPAQLGFQDAAS. The chain crosses the membrane as a helical span at residues 15-45; sequence PVMEELLCFHDHALMIVFLISTLVLYIIIAM. Over 46-59 the chain is Mitochondrial matrix; it reads VSTKLTNKFILDSQ. The chain crosses the membrane as a helical span at residues 60–87; sequence EIEIVWTVLPAIILILIALPSLRILYLM. At 88-230 the chain is on the mitochondrial intermembrane side; it reads DEINDPHVTI…NWSSAMLEDA (143 aa). H161, C196, E198, C200, H204, and M207 together coordinate Cu cation. E198 is a binding site for Mg(2+).

It belongs to the cytochrome c oxidase subunit 2 family. As to quaternary structure, component of the cytochrome c oxidase (complex IV, CIV), a multisubunit enzyme composed of 14 subunits. The complex is composed of a catalytic core of 3 subunits MT-CO1, MT-CO2 and MT-CO3, encoded in the mitochondrial DNA, and 11 supernumerary subunits COX4I, COX5A, COX5B, COX6A, COX6B, COX6C, COX7A, COX7B, COX7C, COX8 and NDUFA4, which are encoded in the nuclear genome. The complex exists as a monomer or a dimer and forms supercomplexes (SCs) in the inner mitochondrial membrane with NADH-ubiquinone oxidoreductase (complex I, CI) and ubiquinol-cytochrome c oxidoreductase (cytochrome b-c1 complex, complex III, CIII), resulting in different assemblies (supercomplex SCI(1)III(2)IV(1) and megacomplex MCI(2)III(2)IV(2)). Found in a complex with TMEM177, COA6, COX18, COX20, SCO1 and SCO2. Interacts with TMEM177 in a COX20-dependent manner. Interacts with COX20. Interacts with COX16. Cu cation serves as cofactor.

The protein resides in the mitochondrion inner membrane. The catalysed reaction is 4 Fe(II)-[cytochrome c] + O2 + 8 H(+)(in) = 4 Fe(III)-[cytochrome c] + 2 H2O + 4 H(+)(out). Component of the cytochrome c oxidase, the last enzyme in the mitochondrial electron transport chain which drives oxidative phosphorylation. The respiratory chain contains 3 multisubunit complexes succinate dehydrogenase (complex II, CII), ubiquinol-cytochrome c oxidoreductase (cytochrome b-c1 complex, complex III, CIII) and cytochrome c oxidase (complex IV, CIV), that cooperate to transfer electrons derived from NADH and succinate to molecular oxygen, creating an electrochemical gradient over the inner membrane that drives transmembrane transport and the ATP synthase. Cytochrome c oxidase is the component of the respiratory chain that catalyzes the reduction of oxygen to water. Electrons originating from reduced cytochrome c in the intermembrane space (IMS) are transferred via the dinuclear copper A center (CU(A)) of subunit 2 and heme A of subunit 1 to the active site in subunit 1, a binuclear center (BNC) formed by heme A3 and copper B (CU(B)). The BNC reduces molecular oxygen to 2 water molecules using 4 electrons from cytochrome c in the IMS and 4 protons from the mitochondrial matrix. In Danio rerio (Zebrafish), this protein is Cytochrome c oxidase subunit 2 (mt-co2).